Consider the following 308-residue polypeptide: Acetylglutamate kinase (308 aa).

Residues 86 to 87 (GG), arginine 108, and asparagine 201 contribute to the substrate site.

The protein belongs to the acetylglutamate kinase family. ArgB subfamily.

The protein resides in the cytoplasm. The catalysed reaction is N-acetyl-L-glutamate + ATP = N-acetyl-L-glutamyl 5-phosphate + ADP. The protein operates within amino-acid biosynthesis; L-arginine biosynthesis; N(2)-acetyl-L-ornithine from L-glutamate: step 2/4. Functionally, catalyzes the ATP-dependent phosphorylation of N-acetyl-L-glutamate. The polypeptide is Acetylglutamate kinase (Prochlorococcus marinus (strain MIT 9303)).